We begin with the raw amino-acid sequence, 378 residues long: Circumsporozoite protein (378 aa).

A signal peptide spans 1-22 (MKNFNLLVVSSILLVDLFPTNC). Positions 50–288 (AQVRQSASRG…AGAGQGQNNE (239 aa)) are disordered. A compositionally biased stretch (basic and acidic residues) spans 65 to 93 (NPKDEEGADKPKKKEEKKVEPKKPRENKL). The required for the binding to heparan sulfate proteoglycans (HSPGs) on the surface of host hepatocytes stretch occupies residues 81–89 (KKVEPKKPR). The region I; contains the proteolytic cleavage site stretch occupies residues 92–96 (KLKQP). Low complexity predominate over residues 96–203 (PPAGDGAPEG…RAGGQPAAGG (108 aa)). One copy of the 1-1; truncated repeat lies at 97–102 (PAGDGA). Positions 97–191 (PAGDGAPEGD…AAPAGDGAPA (95 aa)) are 11 X 9 AA tandem repeats of P-[AE]-G-D-G-A-P-A-[AG]. Tandem repeats lie at residues 103–111 (PEGDGAPAA), 112–120 (PAGDGAPAA), 121–129 (PAGDGAPAA), 130–138 (PAGDGAPAA), 139–147 (PAGDGAPAA), 148–156 (PAGDGAPAA), 157–165 (PAGDGAPAA), 166–174 (PAGDGAPAA), 175–183 (PAGDGAPAA), 184–191 (PAGDGAPA), 193–208 (NRAG…QAGG), 209–224 (NRAG…QAGG), and 225–240 (NRAG…QAGG). The interval 193-268 (NRAGGQPAAG…GAQAGGANAG (76 aa)) is 6 X 16 AA approximate tandem repeats of N-R-A-G-G-Q-P-A-A-G-G-N-Q-A-G-G. Residues 228 to 251 (GGQPAAGGNQAGGQPAAGGNQAGA) are compositionally biased toward low complexity. The stretch at 241-251 (QPAAGGNQAGA) is one 2-4; approximate; truncated repeat. Residues 252 to 260 (QAGGNQAGA) form a 2-5; approximate; truncated repeat. Gly residues-rich tracts occupy residues 252–266 (QAGG…GGAN) and 274–283 (EAGGNAGAGQ). A 2-6; approximate; truncated repeat occupies 261–268 (QAGGANAG). The region spanning 304 to 356 (KIRSTLGVEWSPCSVTCGKGVRMRRKVSAANKKPEELDVNDLETEVCTMDKCA) is the TSP type-1 domain. 2 disulfide bridges follow: cysteine 316–cysteine 350 and cysteine 320–cysteine 355. Threonine 319 is a glycosylation site (O-linked (Fuc) threonine). A lipid anchor (GPI-anchor amidated cysteine) is attached at cysteine 355. Positions 356–378 (AGIFNVVSNSLRLVILLVLALFN) are cleaved as a propeptide — removed in mature form.

This sequence belongs to the plasmodium circumsporozoite protein family. Post-translationally, during host cell invasion, proteolytically cleaved at the cell membrane in the region I by a papain-like cysteine protease of parasite origin. Cleavage is triggered by the sporozoite contact with highly sulfated heparan sulfate proteoglycans (HSPGs) present on the host hepatocyte cell surface. Cleavage exposes the TSP type-1 (TSR) domain and is required for productive invasion of host hepatocytes but not for adhesion to the host cell membrane. Cleavage is dispensable for sporozoite development in the oocyst, motility and for traversal of host and vector cells. In terms of processing, O-glycosylated; maybe by POFUT2.

It is found in the cell membrane. Its subcellular location is the cytoplasm. Essential sporozoite protein. In the mosquito vector, required for sporozoite development in the oocyst, migration through the vector hemolymph and entry into the vector salivary glands. In the vertebrate host, required for sporozoite migration through the host dermis and infection of host hepatocytes. Binds to highly sulfated heparan sulfate proteoglycans (HSPGs) on the surface of host hepatocytes. In terms of biological role, in the vertebrate host, binds to highly sulfated heparan sulfate proteoglycans (HSPGs) on the surface of host hepatocytes and is required for sporozoite invasion of the host hepatocytes. This is Circumsporozoite protein from Plasmodium cynomolgi (strain Berok).